The sequence spans 777 residues: Hepatocyte growth factor-regulated tyrosine kinase substrate (777 aa).

The region spanning 15–143 (ATSQLLLETD…IMKVEGHVFP (129 aa)) is the VHS domain. Residues 160-220 (WVDAEECHRC…VCEPCYEQLN (61 aa)) form an FYVE-type zinc finger. The Zn(2+) site is built by Cys-166, Cys-169, Cys-182, Cys-185, Cys-190, and Cys-193. Lys-207 is modified (N6-acetyllysine). The Zn(2+) site is built by Cys-212 and Cys-215. Phosphotyrosine is present on Tyr-216. The disordered stretch occupies residues 223-319 (AEGKATSTTE…SPVNSSAPLA (97 aa)). The interval 225 to 543 (GKATSTTELP…QRLQEQEKER (319 aa)) is interaction with SNX1. Residues 258-277 (QEEEELQLALALSQSEAEEK) form the UIM domain. A compositionally biased stretch (low complexity) spans 290-311 (PKAEPMPSASSAPPASSLYSSP). Phosphotyrosine is present on residues Tyr-308, Tyr-329, and Tyr-334. The disordered stretch occupies residues 338–407 (KQEEARKSPT…NGESEESHEQ (70 aa)). An interaction with SNAP25 and TRAK2 region spans residues 445-543 (SINGMHPQLL…QRLQEQEKER (99 aa)). The segment at 454–572 (LELLNQLDER…FPLPYAQLQA (119 aa)) is interaction with STAM. The segment at 480 to 777 (ARGALSALRE…GSEAQLISFD (298 aa)) is interaction with NF2. An N6-succinyllysine modification is found at Lys-551. The disordered stretch occupies residues 718–777 (LPSQDASLPPQQPYIAGQQPMYQQMAPSGGPPQQQPPVAQQPQAQGPPAQGSEAQLISFD). The segment covering 753-768 (PPVAQQPQAQGPPAQG) has biased composition (low complexity).

As to quaternary structure, component of the ESCRT-0 complex composed of STAM or STAM2 and HGS. Part of a complex at least composed of HSG, STAM2 (or probably STAM) and EPS15. Interacts with STAM. Interacts with STAM2. Interacts with EPS15; the interaction is direct, calcium-dependent and inhibited by SNAP25. Identified in a complex with STAM and LITAF. Found in a complex with STAM and E3 ligase ITCH and DTX3L. Interacts with E3 ligase DTX3L; the interaction brings together STAM and HSG, promotes their recruitment to early endosomes and decreases STAM and HGS ubiquitination by ITCH. Interacts with NF2; the interaction is direct. Interacts with ubiquitin; the interaction is direct. Interacts with VPS37C. Interacts with SMAD1, SMAD2 and SMAD3. Interacts with TSG101; the interaction mediates the association with the ESCRT-I complex. Interacts with SNAP25; the interaction is direct and decreases with addition of increasing concentrations of free calcium. Interacts with SNX1; the interaction is direct. Component of a 550 kDa membrane complex at least composed of HGS and SNX1 but excluding EGFR. Interacts with TRAK1. Interacts with TRAK2. Component of the CART complex, at least composed of ACTN4, HGS/HRS, MYO5B and TRIM3. Interacts (via UIM domain) with UBQLN1 (via ubiquitin-like domain). Interacts with ARRDC3. Identified in a complex containing at least ARRDC4, AVPR2 and HGS. Interacts with LAPTM4B; promotes HGS ubiquitination. Post-translationally, phosphorylated on Tyr-334. A minor site of phosphorylation on Tyr-329 is detected. Phosphorylation occurs in response to EGF, IL-2, GM-CSF and HGF. In terms of processing, ubiquitinated. Ubiquitinated by ITCH. Ubiquitous expression in adult and fetal tissues with higher expression in testis and peripheral blood leukocytes.

Its subcellular location is the cytoplasm. The protein localises to the early endosome membrane. The protein resides in the endosome. It localises to the multivesicular body membrane. Its function is as follows. Involved in intracellular signal transduction mediated by cytokines and growth factors. When associated with STAM, it suppresses DNA signaling upon stimulation by IL-2 and GM-CSF. Could be a direct effector of PI3-kinase in vesicular pathway via early endosomes and may regulate trafficking to early and late endosomes by recruiting clathrin. May concentrate ubiquitinated receptors within clathrin-coated regions. Involved in down-regulation of receptor tyrosine kinase via multivesicular body (MVBs) when complexed with STAM (ESCRT-0 complex). The ESCRT-0 complex binds ubiquitin and acts as a sorting machinery that recognizes ubiquitinated receptors and transfers them to further sequential lysosomal sorting/trafficking processes. May contribute to the efficient recruitment of SMADs to the activin receptor complex. Involved in receptor recycling via its association with the CART complex, a multiprotein complex required for efficient transferrin receptor recycling but not for EGFR degradation. In Homo sapiens (Human), this protein is Hepatocyte growth factor-regulated tyrosine kinase substrate (HGS).